Here is a 66-residue protein sequence, read N- to C-terminus: Large ribosomal subunit protein uL29 (66 aa).

Belongs to the universal ribosomal protein uL29 family.

This is Large ribosomal subunit protein uL29 from Thermoplasma volcanium (strain ATCC 51530 / DSM 4299 / JCM 9571 / NBRC 15438 / GSS1).